A 157-amino-acid chain; its full sequence is Aspartate carbamoyltransferase regulatory chain (157 aa).

Residues Cys-108, Cys-113, Cys-138, and Cys-141 each contribute to the Zn(2+) site.

It belongs to the PyrI family. Contains catalytic and regulatory chains. Zn(2+) serves as cofactor.

Its function is as follows. Involved in allosteric regulation of aspartate carbamoyltransferase. The chain is Aspartate carbamoyltransferase regulatory chain from Ignicoccus hospitalis (strain KIN4/I / DSM 18386 / JCM 14125).